Reading from the N-terminus, the 141-residue chain is Large ribosomal subunit protein uL11c (141 aa).

The protein belongs to the universal ribosomal protein uL11 family. Part of the ribosomal stalk of the 50S ribosomal subunit. Interacts with L10 and the large rRNA to form the base of the stalk. L10 forms an elongated spine to which L12 dimers bind in a sequential fashion forming a multimeric L10(L12)X complex.

The protein resides in the plastid. It is found in the chloroplast. Functionally, forms part of the ribosomal stalk which helps the ribosome interact with GTP-bound translation factors. The chain is Large ribosomal subunit protein uL11c from Pyropia yezoensis (Susabi-nori).